We begin with the raw amino-acid sequence, 548 residues long: T-complex protein 1 subunit theta (548 aa).

N-acetylalanine is present on Ala2. Ser23 is subject to Phosphoserine. Tyr30 carries the phosphotyrosine modification. 2 residues coordinate ADP: Tyr47 and Gly48. Position 99 (Asp99) interacts with Mg(2+). ADP is bound by residues Gly100, Thr101, Asn102, and Phe103. Gly100, Thr101, and Asn102 together coordinate ATP. Ser162 is subject to Phosphoserine. Met169, Ser170, and Lys171 together coordinate ADP. Residues Ser170 and Lys171 each coordinate ATP. Glycyl lysine isopeptide (Lys-Gly) (interchain with G-Cter in SUMO2) cross-links involve residues Lys224, Lys254, and Lys260. Phosphoserine is present on residues Ser269 and Ser317. Residues Lys318 and Lys400 each carry the N6-acetyllysine modification. Gly412 is a binding site for ADP. Position 412 (Gly412) interacts with ATP. Lys459 is covalently cross-linked (Glycyl lysine isopeptide (Lys-Gly) (interchain with G-Cter in SUMO1)). Lys466 bears the N6-acetyllysine mark. An ADP-binding site is contributed by Asp499. ATP-binding residues include Asp499 and Lys504. Residue Tyr505 is modified to Phosphotyrosine. The interval Pro529–Asp548 is disordered. Residue Lys534 forms a Glycyl lysine isopeptide (Lys-Gly) (interchain with G-Cter in SUMO2) linkage. Phosphoserine is present on Ser537. Lys539 is covalently cross-linked (Glycyl lysine isopeptide (Lys-Gly) (interchain with G-Cter in SUMO2)).

Belongs to the TCP-1 chaperonin family. Component of the chaperonin-containing T-complex (TRiC), a hexadecamer composed of two identical back-to-back stacked rings enclosing a protein folding chamber. Each ring is made up of eight different subunits: TCP1/CCT1, CCT2, CCT3, CCT4, CCT5, CCT6A/CCT6, CCT7, CCT8. Interacts with PACRG. Interacts with DNAAF4. Interacts with synaptic plasticity regulator PANTS.

The protein resides in the cytoplasm. It is found in the cytoskeleton. The protein localises to the microtubule organizing center. Its subcellular location is the centrosome. It localises to the cilium basal body. The enzyme catalyses ATP + H2O = ADP + phosphate + H(+). Functionally, component of the chaperonin-containing T-complex (TRiC), a molecular chaperone complex that assists the folding of actin, tubulin and other proteins upon ATP hydrolysis. The TRiC complex mediates the folding of WRAP53/TCAB1, thereby regulating telomere maintenance. As part of the TRiC complex may play a role in the assembly of BBSome, a complex involved in ciliogenesis regulating transports vesicles to the cilia. This chain is T-complex protein 1 subunit theta (CCT8), found in Bos taurus (Bovine).